The primary structure comprises 466 residues: Asparagine--tRNA ligase (466 aa).

The protein belongs to the class-II aminoacyl-tRNA synthetase family. As to quaternary structure, homodimer.

It localises to the cytoplasm. It carries out the reaction tRNA(Asn) + L-asparagine + ATP = L-asparaginyl-tRNA(Asn) + AMP + diphosphate + H(+). This is Asparagine--tRNA ligase from Salmonella typhimurium (strain LT2 / SGSC1412 / ATCC 700720).